Here is a 257-residue protein sequence, read N- to C-terminus: MLTLYGTELSSRLLLGTARYPSPAILAEAVRRSKTEIVTVSLRRETAGGKAGGAFFELIRDLGVRVLPNTAGCHSVKEAALTAKMAREVFRTNWIKLELIGHQDTLQPDVFQLVEAARILTEDGFEVFPYTTEDLVVGEHLLGAGCKVLMPWCAPIGSAMGPQNIPGLRAMRAEFPDLPLIVDAGIGRPSHAATVMELGFDAVLLNTAVASAADPAAMAEAFANAIDAGHGGYLAGLLEPRDMAVPSTPVIGKGVFA.

The active-site Schiff-base intermediate with DXP is the lysine 96. Residues glycine 157, 184 to 185 (AG), and 206 to 207 (NT) contribute to the 1-deoxy-D-xylulose 5-phosphate site.

This sequence belongs to the ThiG family. In terms of assembly, homotetramer. Forms heterodimers with either ThiH or ThiS.

The protein localises to the cytoplasm. It carries out the reaction [ThiS sulfur-carrier protein]-C-terminal-Gly-aminoethanethioate + 2-iminoacetate + 1-deoxy-D-xylulose 5-phosphate = [ThiS sulfur-carrier protein]-C-terminal Gly-Gly + 2-[(2R,5Z)-2-carboxy-4-methylthiazol-5(2H)-ylidene]ethyl phosphate + 2 H2O + H(+). It functions in the pathway cofactor biosynthesis; thiamine diphosphate biosynthesis. Catalyzes the rearrangement of 1-deoxy-D-xylulose 5-phosphate (DXP) to produce the thiazole phosphate moiety of thiamine. Sulfur is provided by the thiocarboxylate moiety of the carrier protein ThiS. In vitro, sulfur can be provided by H(2)S. The chain is Thiazole synthase from Allorhizobium ampelinum (strain ATCC BAA-846 / DSM 112012 / S4) (Agrobacterium vitis (strain S4)).